Here is a 71-residue protein sequence, read N- to C-terminus: Large ribosomal subunit protein bL31 (71 aa).

4 residues coordinate Zn(2+): Cys16, Cys18, Cys37, and Cys40.

It belongs to the bacterial ribosomal protein bL31 family. Type A subfamily. Part of the 50S ribosomal subunit. Zn(2+) serves as cofactor.

Functionally, binds the 23S rRNA. The sequence is that of Large ribosomal subunit protein bL31 from Aeromonas salmonicida (strain A449).